The sequence spans 342 residues: Platelet-activating factor receptor (342 aa).

Residues 1–16 (MELNSSSRVDSEFRYT) lie on the Extracellular side of the membrane. Asn-4 carries an N-linked (GlcNAc...) asparagine glycan. Residues 17 to 38 (LFPIVYSIIFVLGIIANGYVLW) form a helical membrane-spanning segment. Topologically, residues 39 to 54 (VFARLYPSKKLNEIKI) are cytoplasmic. Residues 55–74 (FMVNLTVADLLFLITLPLWI) traverse the membrane as a helical segment. The Extracellular segment spans residues 75–91 (VYYSNQGNWFLPKFLCN). Cys-90 and Cys-173 are oxidised to a cystine. The chain crosses the membrane as a helical span at residues 92–113 (LAGCLFFINTYCSVAFLGVITY). The Cytoplasmic portion of the chain corresponds to 114 to 133 (NRFQAVKYPIKTAQATTRKR). Residues 134–155 (GIALSLVIWVAIVAAASYFLVM) traverse the membrane as a helical segment. At 156–184 (DSTNVVSNKAGSGNITRCFEHYEKGSKPV) the chain is on the extracellular side. An N-linked (GlcNAc...) asparagine glycan is attached at Asn-169. The helical transmembrane segment at 185-205 (LIIHICIVLGFFIVFLLILFC) threads the bilayer. Residues 206–233 (NLVIIHTLLRQPVKQQRNAEVRRRALWM) are Cytoplasmic-facing. A helical membrane pass occupies residues 234 to 254 (VCTVLAVFVICFVPHHMVQLP). The Extracellular segment spans residues 255–276 (WTLAELGMWPSSNHQAINDAHQ). A helical membrane pass occupies residues 277-296 (VTLCLLSTNCVLDPVIYCFL). Topologically, residues 297-342 (TKKFRKHLSEKLNIMRSSQKCSRVTTDTGTEMAIPINHTPVNPIKN) are cytoplasmic.

The protein belongs to the G-protein coupled receptor 1 family. Interacts with ARRB1.

It localises to the cell membrane. Functionally, receptor for platelet activating factor, a chemotactic phospholipid mediator that possesses potent inflammatory, smooth-muscle contractile and hypotensive activity. Seems to mediate its action via a G protein that activates a phosphatidylinositol-calcium second messenger system. The protein is Platelet-activating factor receptor (PTAFR) of Cavia porcellus (Guinea pig).